Reading from the N-terminus, the 364-residue chain is Threonine-phosphate decarboxylase (364 aa).

O-phospho-L-threonine-binding positions include 8–9 (HG), Asn32, and Asn157. At Lys216 the chain carries N6-(pyridoxal phosphate)lysine. Residues Arg323 and Arg337 each contribute to the O-phospho-L-threonine site.

The protein belongs to the class-II pyridoxal-phosphate-dependent aminotransferase family. Homodimer. Pyridoxal 5'-phosphate serves as cofactor.

The catalysed reaction is O-phospho-L-threonine + H(+) = (R)-1-aminopropan-2-yl phosphate + CO2. It functions in the pathway cofactor biosynthesis; adenosylcobalamin biosynthesis. In terms of biological role, decarboxylates L-threonine-O-3-phosphate to yield (R)-1-amino-2-propanol O-2-phosphate, the precursor for the linkage between the nucleotide loop and the corrin ring in cobalamin. This chain is Threonine-phosphate decarboxylase (cobD), found in Salmonella typhimurium (strain LT2 / SGSC1412 / ATCC 700720).